The following is a 121-amino-acid chain: Large ribosomal subunit protein bL12 (121 aa).

Belongs to the bacterial ribosomal protein bL12 family. Homodimer. Part of the ribosomal stalk of the 50S ribosomal subunit. Forms a multimeric L10(L12)X complex, where L10 forms an elongated spine to which 2 to 4 L12 dimers bind in a sequential fashion. Binds GTP-bound translation factors.

In terms of biological role, forms part of the ribosomal stalk which helps the ribosome interact with GTP-bound translation factors. Is thus essential for accurate translation. The sequence is that of Large ribosomal subunit protein bL12 from Shewanella frigidimarina (strain NCIMB 400).